Consider the following 862-residue polypeptide: DNA mismatch repair protein MutS (862 aa).

G621–S628 provides a ligand contact to ATP.

It belongs to the DNA mismatch repair MutS family.

In terms of biological role, this protein is involved in the repair of mismatches in DNA. It is possible that it carries out the mismatch recognition step. This protein has a weak ATPase activity. This Vibrio cholerae serotype O1 (strain ATCC 39541 / Classical Ogawa 395 / O395) protein is DNA mismatch repair protein MutS.